The sequence spans 325 residues: Phosphate acyltransferase (325 aa).

This sequence belongs to the PlsX family. Homodimer. Probably interacts with PlsY.

The protein resides in the cytoplasm. It catalyses the reaction a fatty acyl-[ACP] + phosphate = an acyl phosphate + holo-[ACP]. It participates in lipid metabolism; phospholipid metabolism. Functionally, catalyzes the reversible formation of acyl-phosphate (acyl-PO(4)) from acyl-[acyl-carrier-protein] (acyl-ACP). This enzyme utilizes acyl-ACP as fatty acyl donor, but not acyl-CoA. The polypeptide is Phosphate acyltransferase (Mycoplasmopsis pulmonis (strain UAB CTIP) (Mycoplasma pulmonis)).